Reading from the N-terminus, the 148-residue chain is Lysozyme C (148 aa).

Positions 1–18 (MKALIILGLVLLSVTVQG) are cleaved as a signal peptide. One can recognise a C-type lysozyme domain in the interval 19-148 (KIFERCELAR…VSQYVKGCGV (130 aa)). Cystine bridges form between C24–C146, C48–C134, C83–C99, and C95–C113. Active-site residues include E53 and D71.

This sequence belongs to the glycosyl hydrolase 22 family. Monomer.

It localises to the secreted. It catalyses the reaction Hydrolysis of (1-&gt;4)-beta-linkages between N-acetylmuramic acid and N-acetyl-D-glucosamine residues in a peptidoglycan and between N-acetyl-D-glucosamine residues in chitodextrins.. Lysozymes have primarily a bacteriolytic function; those in tissues and body fluids are associated with the monocyte-macrophage system and enhance the activity of immunoagents. The polypeptide is Lysozyme C (LYZ) (Nasalis larvatus (Proboscis monkey)).